The chain runs to 508 residues: Maturase K (508 aa).

Belongs to the intron maturase 2 family. MatK subfamily.

It is found in the plastid. The protein localises to the chloroplast. In terms of biological role, usually encoded in the trnK tRNA gene intron. Probably assists in splicing its own and other chloroplast group II introns. The sequence is that of Maturase K from Collinsia heterophylla (Purple Chinese houses).